The chain runs to 344 residues: UDP-N-acetylenolpyruvoylglucosamine reductase (344 aa).

The 171-residue stretch at 19 to 189 (INVTAKKIIF…IAVGIKIKKN (171 aa)) folds into the FAD-binding PCMH-type domain. Arginine 165 is an active-site residue. Residue serine 235 is the Proton donor of the active site. Residue glutamate 331 is part of the active site.

Belongs to the MurB family. It depends on FAD as a cofactor.

The protein resides in the cytoplasm. It catalyses the reaction UDP-N-acetyl-alpha-D-muramate + NADP(+) = UDP-N-acetyl-3-O-(1-carboxyvinyl)-alpha-D-glucosamine + NADPH + H(+). Its pathway is cell wall biogenesis; peptidoglycan biosynthesis. In terms of biological role, cell wall formation. The chain is UDP-N-acetylenolpyruvoylglucosamine reductase from Buchnera aphidicola subsp. Schizaphis graminum (strain Sg).